An 87-amino-acid polypeptide reads, in one-letter code: UPF0213 protein SYNAS_10430 (87 aa).

Positions 2 to 78 (SKNYVYILEC…KKMSRAEKLQ (77 aa)) constitute a GIY-YIG domain.

Belongs to the UPF0213 family.

The sequence is that of UPF0213 protein SYNAS_10430 from Syntrophus aciditrophicus (strain SB).